Reading from the N-terminus, the 190-residue chain is dTTP/UTP pyrophosphatase (190 aa).

Asp-71 acts as the Proton acceptor in catalysis.

The protein belongs to the Maf family. YhdE subfamily. A divalent metal cation is required as a cofactor.

The protein localises to the cytoplasm. The enzyme catalyses dTTP + H2O = dTMP + diphosphate + H(+). It catalyses the reaction UTP + H2O = UMP + diphosphate + H(+). In terms of biological role, nucleoside triphosphate pyrophosphatase that hydrolyzes dTTP and UTP. May have a dual role in cell division arrest and in preventing the incorporation of modified nucleotides into cellular nucleic acids. The protein is dTTP/UTP pyrophosphatase of Xanthomonas campestris pv. campestris (strain ATCC 33913 / DSM 3586 / NCPPB 528 / LMG 568 / P 25).